The following is a 146-amino-acid chain: Hemoglobin subunit beta (146 aa).

A Globin domain is found at 2–146 (HWTAEEKSAI…VAHALAHQYH (145 aa)). 2 residues coordinate heme b: H63 and H92.

This sequence belongs to the globin family. As to quaternary structure, heterotetramer of two alpha chains and two beta chains. Oxygenation results in dissociation to dimers. As to expression, red blood cells.

Its function is as follows. Involved in oxygen transport from the lung to the various peripheral tissues. This chain is Hemoglobin subunit beta (HBB), found in Erythrolamprus miliaris (South American water snake).